The primary structure comprises 426 residues: Glutamyl-tRNA reductase (426 aa).

Substrate-binding positions include 49–52 (TCNR), serine 109, 114–116 (EGQ), and glutamine 120. Residue cysteine 50 is the Nucleophile of the active site. An NADP(+)-binding site is contributed by 189–194 (GAGETG).

The protein belongs to the glutamyl-tRNA reductase family. Homodimer.

The catalysed reaction is (S)-4-amino-5-oxopentanoate + tRNA(Glu) + NADP(+) = L-glutamyl-tRNA(Glu) + NADPH + H(+). It participates in porphyrin-containing compound metabolism; protoporphyrin-IX biosynthesis; 5-aminolevulinate from L-glutamyl-tRNA(Glu): step 1/2. In terms of biological role, catalyzes the NADPH-dependent reduction of glutamyl-tRNA(Glu) to glutamate 1-semialdehyde (GSA). The sequence is that of Glutamyl-tRNA reductase (hemA) from Chlorobaculum parvum (strain DSM 263 / NCIMB 8327) (Chlorobium vibrioforme subsp. thiosulfatophilum).